We begin with the raw amino-acid sequence, 236 residues long: UPF0502 protein Bcen2424_5610 (236 aa).

This sequence belongs to the UPF0502 family.

This is UPF0502 protein Bcen2424_5610 from Burkholderia cenocepacia (strain HI2424).